Consider the following 545-residue polypeptide: Chaperonin GroEL (545 aa).

ATP is bound by residues 29–32 (TMGP), Lys50, 86–90 (DGTTT), Gly414, 477–479 (NAA), and Asp493.

Belongs to the chaperonin (HSP60) family. In terms of assembly, forms a cylinder of 14 subunits composed of two heptameric rings stacked back-to-back. Interacts with the co-chaperonin GroES.

The protein resides in the cytoplasm. It carries out the reaction ATP + H2O + a folded polypeptide = ADP + phosphate + an unfolded polypeptide.. In terms of biological role, together with its co-chaperonin GroES, plays an essential role in assisting protein folding. The GroEL-GroES system forms a nano-cage that allows encapsulation of the non-native substrate proteins and provides a physical environment optimized to promote and accelerate protein folding. In Campylobacter fetus subsp. fetus (strain 82-40), this protein is Chaperonin GroEL.